The sequence spans 268 residues: Bis(5'-nucleosyl)-tetraphosphatase, symmetrical (268 aa).

Belongs to the Ap4A hydrolase family.

The catalysed reaction is P(1),P(4)-bis(5'-adenosyl) tetraphosphate + H2O = 2 ADP + 2 H(+). Functionally, hydrolyzes diadenosine 5',5'''-P1,P4-tetraphosphate to yield ADP. This is Bis(5'-nucleosyl)-tetraphosphatase, symmetrical from Vibrio campbellii (strain ATCC BAA-1116).